Reading from the N-terminus, the 116-residue chain is Phosphoribosyl-AMP cyclohydrolase (116 aa).

Asp81 contributes to the Mg(2+) binding site. Cys82 is a binding site for Zn(2+). Mg(2+)-binding residues include Asp83 and Asp85. Cys98 and Cys105 together coordinate Zn(2+).

This sequence belongs to the PRA-CH family. In terms of assembly, homodimer. Mg(2+) is required as a cofactor. Requires Zn(2+) as cofactor.

It localises to the cytoplasm. The enzyme catalyses 1-(5-phospho-beta-D-ribosyl)-5'-AMP + H2O = 1-(5-phospho-beta-D-ribosyl)-5-[(5-phospho-beta-D-ribosylamino)methylideneamino]imidazole-4-carboxamide. The protein operates within amino-acid biosynthesis; L-histidine biosynthesis; L-histidine from 5-phospho-alpha-D-ribose 1-diphosphate: step 3/9. In terms of biological role, catalyzes the hydrolysis of the adenine ring of phosphoribosyl-AMP. The chain is Phosphoribosyl-AMP cyclohydrolase from Mycolicibacterium vanbaalenii (strain DSM 7251 / JCM 13017 / BCRC 16820 / KCTC 9966 / NRRL B-24157 / PYR-1) (Mycobacterium vanbaalenii).